Reading from the N-terminus, the 102-residue chain is ATP-dependent Clp protease adapter protein ClpS (102 aa).

The protein belongs to the ClpS family. As to quaternary structure, binds to the N-terminal domain of the chaperone ClpA.

Involved in the modulation of the specificity of the ClpAP-mediated ATP-dependent protein degradation. This Shewanella woodyi (strain ATCC 51908 / MS32) protein is ATP-dependent Clp protease adapter protein ClpS.